A 1385-amino-acid polypeptide reads, in one-letter code: Formin-like protein 7 (1385 aa).

The 185-residue stretch at 9 to 193 (FKKPPDGLLL…RYVSMRNVVP (185 aa)) folds into the Phosphatase tensin-type domain. The active-site Phosphocysteine intermediate is cysteine 126. One can recognise a C2 tensin-type domain in the interval 199 to 358 (DRALTLDSVI…KASSTSQGNI (160 aa)). 4 disordered regions span residues 345 to 367 (IPQRKASSTSQGNIDESPADGSE), 427 to 510 (APSR…LTVN), 649 to 989 (STAA…PLHW), and 1362 to 1385 (KRAQMEAEKEKVKAAAHKEDLLEP). 3 stretches are compositionally biased toward polar residues: residues 349–358 (KASSTSQGNI), 448–470 (TSASSMALPSSTVIPQAPSSPVQ), and 483–510 (PAQSASKSAENSGSQTPVNQEPSPLTVN). 2 stretches are compositionally biased toward pro residues: residues 654–665 (PPLPPPLPPPLK) and 689–701 (TQPPLPPPPPPIQ). The segment covering 702 to 718 (PTLISNSIYSSTSSVVS) has biased composition (low complexity). Composition is skewed to pro residues over residues 727-758 (PAPPPPPPPPPPPPFPVSSFSPPQPPPQPPSA), 766-795 (PVPPPPPPPPPPMIPGMKTPPTPPPPPPAA), and 802-815 (AVPPPPPPPPPPMV). Over residues 855 to 867 (QTSSLVSSLPSSR) the composition is skewed to low complexity. Pro residues-rich tracts occupy residues 895–906 (SAPPAPPLPPPK) and 921–932 (WPPPPPPGPPPK). Residues 933-942 (NSSNSLPSKG) show a composition bias toward low complexity. The FH2 domain occupies 974–1372 (RPNQSSKRTP…RAQMEAEKEK (399 aa)).

Belongs to the formin-like family. Class-II subfamily.

The sequence is that of Formin-like protein 7 (FH7) from Oryza sativa subsp. japonica (Rice).